The chain runs to 720 residues: Glycine--tRNA ligase beta subunit (720 aa).

Belongs to the class-II aminoacyl-tRNA synthetase family. Tetramer of two alpha and two beta subunits.

It is found in the cytoplasm. The catalysed reaction is tRNA(Gly) + glycine + ATP = glycyl-tRNA(Gly) + AMP + diphosphate. In Acidovorax ebreus (strain TPSY) (Diaphorobacter sp. (strain TPSY)), this protein is Glycine--tRNA ligase beta subunit.